The primary structure comprises 312 residues: Methionyl-tRNA formyltransferase (312 aa).

112–115 is a (6S)-5,6,7,8-tetrahydrofolate binding site; it reads SLLP.

Belongs to the Fmt family.

It carries out the reaction L-methionyl-tRNA(fMet) + (6R)-10-formyltetrahydrofolate = N-formyl-L-methionyl-tRNA(fMet) + (6S)-5,6,7,8-tetrahydrofolate + H(+). Its function is as follows. Attaches a formyl group to the free amino group of methionyl-tRNA(fMet). The formyl group appears to play a dual role in the initiator identity of N-formylmethionyl-tRNA by promoting its recognition by IF2 and preventing the misappropriation of this tRNA by the elongation apparatus. The polypeptide is Methionyl-tRNA formyltransferase (Dehalococcoides mccartyi (strain CBDB1)).